The primary structure comprises 119 residues: uncharacterized protein (119 aa).

The N-terminal stretch at 1-26 (MNKLKRLSMLTVMIASVFIFSSHALA) is a signal peptide. Residues 30–104 (YTVSTSSGAP…IVPGFVSDTY (75 aa)) form the SH3b domain.

This sequence to B.subtilis YraJ.

This is an uncharacterized protein from Bacillus subtilis (strain 168).